The sequence spans 292 residues: MNNHFKCIGIVGHPRHPTALTTHEMLYRWLCDQGYEVIVEQQIAHELQLKNVPTGTLAKIGQQADLAVVVGGDGNMLGAARTLARYDINVIGINRGNLGFLTDLDPDNALQQLSDVLEGRYISEKRFLLEAQVCQQERQKRISTAINEVVLHPGKVAHMIEFEVYIDETFAFSQRSDGLIISTPTGSTAYSLSAGGPILTPSLDAITLVPMFPHTLSARPLVINSSSTIRLRFSHRRSDLEISCDSQIALPIQEGEDVLIRRCDYHLNLIHPKDYSYFNTLSTKLGWSKKLF.

The active-site Proton acceptor is Asp-73. NAD(+) contacts are provided by residues 73–74 (DG), 147–148 (NE), His-158, Arg-175, Asp-177, 188–193 (TAYSLS), and Gln-247.

Belongs to the NAD kinase family. A divalent metal cation is required as a cofactor.

The protein resides in the cytoplasm. The catalysed reaction is NAD(+) + ATP = ADP + NADP(+) + H(+). Functionally, involved in the regulation of the intracellular balance of NAD and NADP, and is a key enzyme in the biosynthesis of NADP. Catalyzes specifically the phosphorylation on 2'-hydroxyl of the adenosine moiety of NAD to yield NADP. In Salmonella choleraesuis (strain SC-B67), this protein is NAD kinase.